Reading from the N-terminus, the 365-residue chain is tRNA 2-selenouridine synthase (365 aa).

A Rhodanese domain is found at 15-138; it reads LVNDHPIMDA…MRQFLIETID (124 aa). The active-site S-selanylcysteine intermediate is the C98.

The protein belongs to the SelU family. As to quaternary structure, monomer.

It catalyses the reaction 5-methylaminomethyl-2-thiouridine(34) in tRNA + selenophosphate + (2E)-geranyl diphosphate + H2O + H(+) = 5-methylaminomethyl-2-selenouridine(34) in tRNA + (2E)-thiogeraniol + phosphate + diphosphate. It carries out the reaction 5-methylaminomethyl-2-thiouridine(34) in tRNA + (2E)-geranyl diphosphate = 5-methylaminomethyl-S-(2E)-geranyl-thiouridine(34) in tRNA + diphosphate. The enzyme catalyses 5-methylaminomethyl-S-(2E)-geranyl-thiouridine(34) in tRNA + selenophosphate + H(+) = 5-methylaminomethyl-2-(Se-phospho)selenouridine(34) in tRNA + (2E)-thiogeraniol. The catalysed reaction is 5-methylaminomethyl-2-(Se-phospho)selenouridine(34) in tRNA + H2O = 5-methylaminomethyl-2-selenouridine(34) in tRNA + phosphate. Its function is as follows. Involved in the post-transcriptional modification of the uridine at the wobble position (U34) of tRNA(Lys), tRNA(Glu) and tRNA(Gln). Catalyzes the conversion of 2-thiouridine (S2U-RNA) to 2-selenouridine (Se2U-RNA). Acts in a two-step process involving geranylation of 2-thiouridine (S2U) to S-geranyl-2-thiouridine (geS2U) and subsequent selenation of the latter derivative to 2-selenouridine (Se2U) in the tRNA chain. The chain is tRNA 2-selenouridine synthase from Shewanella pealeana (strain ATCC 700345 / ANG-SQ1).